The sequence spans 227 residues: MALSIFKDLPAEHPRHLIPSLCRQFYHLGWVTGTGGGMSIKYNDEIYIAPSGVQKERMQPEDLFVQDITGKDLQLPPEIKGLKKSQCTPLFMLAYQHRQAGAVIHTHSQHAVMATLLWPGKTFRCTHLEMIKGVYDEADKRYLRYDEELVVPIIENTPFERDLADSMYAAMMEYPGCSAILVRRHGVYVWGQNWEKAKTMSECYDYLFSIAVEMKKAGIDPQKFESS.

Residue Cys-87 participates in substrate binding. Positions 105 and 107 each coordinate Zn(2+). Residue Glu-129 is the Proton donor/acceptor of the active site. Residue His-185 coordinates Zn(2+).

It belongs to the aldolase class II family. MtnB subfamily. Requires Zn(2+) as cofactor.

The protein resides in the cytoplasm. It catalyses the reaction 5-(methylsulfanyl)-D-ribulose 1-phosphate = 5-methylsulfanyl-2,3-dioxopentyl phosphate + H2O. It participates in amino-acid biosynthesis; L-methionine biosynthesis via salvage pathway; L-methionine from S-methyl-5-thio-alpha-D-ribose 1-phosphate: step 2/6. Its function is as follows. Catalyzes the dehydration of methylthioribulose-1-phosphate (MTRu-1-P) into 2,3-diketo-5-methylthiopentyl-1-phosphate (DK-MTP-1-P). In Drosophila erecta (Fruit fly), this protein is Probable methylthioribulose-1-phosphate dehydratase.